Here is a 492-residue protein sequence, read N- to C-terminus: Cell division protein FtsA (492 aa).

Disordered stretches follow at residues 288-307 (GEET…DGHE) and 429-458 (YTRT…KAPS). A compositionally biased stretch (polar residues) spans 291–303 (TPSQNVQIPTTGS). A compositionally biased stretch (low complexity) spans 436–447 (SSPTPHIHSSPT).

The protein belongs to the FtsA/MreB family. Self-interacts. Interacts with FtsZ.

It is found in the cell inner membrane. Its function is as follows. Cell division protein that is involved in the assembly of the Z ring. May serve as a membrane anchor for the Z ring. This is Cell division protein FtsA from Helicobacter pylori (strain ATCC 700392 / 26695) (Campylobacter pylori).